The sequence spans 357 residues: Nitronate monooxygenase npaC (357 aa).

3 residues coordinate FMN: Q167, G172, and G206.

The protein belongs to the nitronate monooxygenase family. NMO class I subfamily. It depends on FMN as a cofactor.

Functionally, nitronate monooxygenase; part of the gene cluster that mediates the biosynthesis of the deadly neurotoxic nitroalkane 3-nitropropanoic acid (3-NPA) that acts as an antimetabolite of succinate and irreversibly inhibits succinate dehydrogenase and disrupts mitochondrial oxidative phosphorylation. Catalyzes the oxidation of 3-NPA to nitrite and malonic semialdehyde. NpaC is not conserved in all fungal npa clusters and, while it is possible that it serves as a self-protection mechanism against accumulation of 3-NPA (by npaA and npaB) in the producing host, the more likely scenario may be the three enzymes representing an alternative catabolic pathway of aspartate to generate readily metabolizable nitrogen and carbon sources. The polypeptide is Nitronate monooxygenase npaC (Metarhizium robertsii (strain ARSEF 23 / ATCC MYA-3075) (Metarhizium anisopliae (strain ARSEF 23))).